The sequence spans 285 residues: ATP synthase gamma chain (285 aa).

The protein belongs to the ATPase gamma chain family. As to quaternary structure, F-type ATPases have 2 components, CF(1) - the catalytic core - and CF(0) - the membrane proton channel. CF(1) has five subunits: alpha(3), beta(3), gamma(1), delta(1), epsilon(1). CF(0) has three main subunits: a, b and c.

It is found in the cell membrane. Functionally, produces ATP from ADP in the presence of a proton gradient across the membrane. The gamma chain is believed to be important in regulating ATPase activity and the flow of protons through the CF(0) complex. The sequence is that of ATP synthase gamma chain from Geobacillus kaustophilus (strain HTA426).